Reading from the N-terminus, the 629-residue chain is MSMTNYPLLERVNDPADLRRLPRAELKTLAHELRAFVLESVSKTGGHLSSNLGTVELTVALHAVFDTPRDRLVWDVGHQTYPHKILTGRRDRMPSLRQLGGLSGFPQRAESEYDTFGTAHSSTSISAALGMALAAKQRGDERRCVAIIGDGAMTAGMAFEALNNAGVADANLLVILNDNDMSISPPVGALNRYLAQLMSGQFYAKARDMGKSVLKNAPPLLELAKRLEQQAKGMVVPATLFEKFGFNYIGPIDGHDLDSLIPTLENIRGLKGPQFLHVVTKKGQGYKLAEADPVAYHGPGKFDPRVGLVKPATPPKQTFTQVFGQWLCDMADKDKRLVGITPAMREGSGMVEFHQRFPDRYYDVGIAEQHAVTFAAGMACEGVKPVVAIYSTFLQRAYDQLIHDVALQNLPVVFALDRAGLVGADGATHAGAYDIAFVRCIPHMSMACPADERECRQLLTTAYEQDHPVAVRYPRGAGVGVAPLPDLEGLPFGKGEVRRTGQRIAILAFGTLLYPALQAAQALDATVVNMRWAKPLDTQLLLQVAAEHDALVTVEEGCIMGGAGSAVAEALAAAGLQRPLLQLGLPDVFIEHGDPAKLLALQGLDAAGMQRSITERFGALPGAQALAAA.

Residues histidine 78 and 119–121 (AHS) each bind thiamine diphosphate. Mg(2+) is bound at residue aspartate 150. Thiamine diphosphate contacts are provided by residues 151 to 152 (GA), asparagine 179, tyrosine 286, and glutamate 368. Residue asparagine 179 coordinates Mg(2+).

This sequence belongs to the transketolase family. DXPS subfamily. In terms of assembly, homodimer. Requires Mg(2+) as cofactor. It depends on thiamine diphosphate as a cofactor.

The enzyme catalyses D-glyceraldehyde 3-phosphate + pyruvate + H(+) = 1-deoxy-D-xylulose 5-phosphate + CO2. It participates in metabolic intermediate biosynthesis; 1-deoxy-D-xylulose 5-phosphate biosynthesis; 1-deoxy-D-xylulose 5-phosphate from D-glyceraldehyde 3-phosphate and pyruvate: step 1/1. Functionally, catalyzes the acyloin condensation reaction between C atoms 2 and 3 of pyruvate and glyceraldehyde 3-phosphate to yield 1-deoxy-D-xylulose-5-phosphate (DXP). The sequence is that of 1-deoxy-D-xylulose-5-phosphate synthase from Acidovorax sp. (strain JS42).